The following is a 396-amino-acid chain: MVHVTLLYGGRSAEHDVSVRSARFVARTLCLQHTVMLIGITRRGVWYAQPACALEQLCTGTVALSIQEDEKRRVCLVPGGGTAGAFVIAGMPCVTDVVFPVLHGSYGEDGTVQGLLEMLQVPYVGCGVCASALAMDKVKAKMLWQAAGLPVLPFVFFRKDAWRMHMQEFVAQLETRLGYPLFVKPAQAGSSVGASAVQTRAPLIPAIEAAFQWDEVVLVERYVRAREIECALSGNGPYTVHGAGEVIAQGAFYDYEEKYADASVARVLVTAPLETAQYEQITTLALRAYEALGLTGLARVDFFLLETGEVYVNEVNTMPGFTSISLFPQICQAAGVAPQDLMAQLLSCARERFAARAALSTDLHAHVCAPSVTAAHDPDAQGDDWDQRDSNPLPTA.

The region spanning 141–347 (KMLWQAAGLP…PQDLMAQLLS (207 aa)) is the ATP-grasp domain. Position 174–229 (174–229 (ETRLGYPLFVKPAQAGSSVGASAVQTRAPLIPAIEAAFQWDEVVLVERYVRAREIE)) interacts with ATP. Asp301, Glu314, and Asn316 together coordinate Mg(2+). Residues 374-396 (AAHDPDAQGDDWDQRDSNPLPTA) form a disordered region.

The protein belongs to the D-alanine--D-alanine ligase family. Requires Mg(2+) as cofactor. The cofactor is Mn(2+).

It localises to the cytoplasm. The catalysed reaction is 2 D-alanine + ATP = D-alanyl-D-alanine + ADP + phosphate + H(+). It participates in cell wall biogenesis; peptidoglycan biosynthesis. In terms of biological role, cell wall formation. The protein is D-alanine--D-alanine ligase of Treponema pallidum (strain Nichols).